The primary structure comprises 550 residues: Chaperonin GroEL 2 (550 aa).

ATP contacts are provided by residues 30–33, Lys-51, 87–91, Gly-415, 480–482, and Asp-496; these read TLGP, DGTTT, and NAA.

It belongs to the chaperonin (HSP60) family. As to quaternary structure, forms a cylinder of 14 subunits composed of two heptameric rings stacked back-to-back. Interacts with the co-chaperonin GroES.

Its subcellular location is the cytoplasm. It carries out the reaction ATP + H2O + a folded polypeptide = ADP + phosphate + an unfolded polypeptide.. Its function is as follows. Together with its co-chaperonin GroES, plays an essential role in assisting protein folding. The GroEL-GroES system forms a nano-cage that allows encapsulation of the non-native substrate proteins and provides a physical environment optimized to promote and accelerate protein folding. This chain is Chaperonin GroEL 2, found in Erythrobacter litoralis (strain HTCC2594).